The following is a 191-amino-acid chain: Protein YceI (191 aa).

An N-terminal signal peptide occupies residues 1 to 22 (MKKSLLGLTFASLMFSAGSAVA).

Belongs to the UPF0312 family. Type 1 subfamily.

Its subcellular location is the periplasm. The sequence is that of Protein YceI from Escherichia coli O6:H1 (strain CFT073 / ATCC 700928 / UPEC).